The primary structure comprises 437 residues: MTDSEAWPRSAAAFAEAVKLMPGGVNSPVRAFKSVGLTPPFIQRGEGAYLYDIDGHKYIDYVSSWGPLILGHRHPEVVDALEKTLREMGTSFGAPTELENELAREITTAMPAVEMVRLVNSGTEATMSALRLARGYTGREKVVKFAGCYHGHADYFLIQAGSGALTFGIPNSPGVPATVAANTIVAPYNDLAAVEDIFQKAGEEIAAVIVEPVAGNMGCVPPLTGFLAGLRTITKEYGSLLIFDEVMTGFRVAFGGAQALYGIRPDLTCLGKIIGGGLPVGAYGGRREIMERVAPSGPIYQAGTLSGNPLAVSAGLATLKVLKKPGTYERLESLSARLEKGLKEAAAEAGVPVTFNRVGAMFTTFFNPGPVTDYATATASDTRAFAAFFRAMLRQGIYLAPSQFEAAFMSLAHREDDIDCTIAAAREAFKGIAIGDS.

Position 272 is an N6-(pyridoxal phosphate)lysine (lysine 272).

Belongs to the class-III pyridoxal-phosphate-dependent aminotransferase family. HemL subfamily. In terms of assembly, homodimer. Pyridoxal 5'-phosphate serves as cofactor.

It is found in the cytoplasm. It carries out the reaction (S)-4-amino-5-oxopentanoate = 5-aminolevulinate. Its pathway is porphyrin-containing compound metabolism; protoporphyrin-IX biosynthesis; 5-aminolevulinate from L-glutamyl-tRNA(Glu): step 2/2. The polypeptide is Glutamate-1-semialdehyde 2,1-aminomutase (Moorella thermoacetica (strain ATCC 39073 / JCM 9320)).